A 295-amino-acid polypeptide reads, in one-letter code: Glutamyl-Q tRNA(Asp) synthetase (295 aa).

L-glutamate contacts are provided by residues 9-13 (RFAPT) and Glu45. A 'HIGH' region motif is present at residues 12–22 (PTPSGYLHFGS). Positions 101, 103, 115, and 119 each coordinate Zn(2+). L-glutamate is bound by residues Tyr172 and Arg190. The 'KMSKS' region motif lies at 228-232 (KLGKS). Position 231 (Lys231) interacts with ATP.

Belongs to the class-I aminoacyl-tRNA synthetase family. GluQ subfamily. The cofactor is Zn(2+).

Its function is as follows. Catalyzes the tRNA-independent activation of glutamate in presence of ATP and the subsequent transfer of glutamate onto a tRNA(Asp). Glutamate is transferred on the 2-amino-5-(4,5-dihydroxy-2-cyclopenten-1-yl) moiety of the queuosine in the wobble position of the QUC anticodon. This Pseudomonas syringae pv. syringae (strain B728a) protein is Glutamyl-Q tRNA(Asp) synthetase.